Consider the following 434-residue polypeptide: Glutamyl-tRNA reductase (434 aa).

Residues 52 to 55 (TCNR), Ser115, 120 to 122 (ETQ), and Gln126 each bind substrate. Residue Cys53 is the Nucleophile of the active site. 195 to 200 (GAGEMI) contacts NADP(+).

It belongs to the glutamyl-tRNA reductase family. As to quaternary structure, homodimer.

It catalyses the reaction (S)-4-amino-5-oxopentanoate + tRNA(Glu) + NADP(+) = L-glutamyl-tRNA(Glu) + NADPH + H(+). The protein operates within porphyrin-containing compound metabolism; protoporphyrin-IX biosynthesis; 5-aminolevulinate from L-glutamyl-tRNA(Glu): step 1/2. Functionally, catalyzes the NADPH-dependent reduction of glutamyl-tRNA(Glu) to glutamate 1-semialdehyde (GSA). This Cupriavidus necator (strain ATCC 17699 / DSM 428 / KCTC 22496 / NCIMB 10442 / H16 / Stanier 337) (Ralstonia eutropha) protein is Glutamyl-tRNA reductase.